A 449-amino-acid polypeptide reads, in one-letter code: C4-dicarboxylate transport protein (449 aa).

Transmembrane regions (helical) follow at residues 20-42, 62-84, 91-113, 164-181, 202-224, 239-261, 344-366, and 370-389; these read YLQL…HCYP, IISP…VGTV, AMVY…AHVV, ILQV…LALA, LVQM…TIGK, SFYL…FSGF, LALF…AGFI, and ATLT…ILGV.

This sequence belongs to the dicarboxylate/amino acid:cation symporter (DAACS) (TC 2.A.23) family.

The protein resides in the cell inner membrane. Responsible for the transport of dicarboxylates such as succinate, fumarate, and malate from the periplasm across the inner membrane. The chain is C4-dicarboxylate transport protein (dctA) from Xylella fastidiosa (strain 9a5c).